The primary structure comprises 152 residues: MAKMHTKRKGKSSSTRPIRTDPPEWCKIGADEVTTIVLDLWKQGVSTAEIGMVLRDRYGVPDAKLITGKKVTTILKENNVAPNIPEDLTNLIVKALGLRKHLSVNKKDVHNKRSLNLTESKIRRLVKYYKQEKVLPRDWFYKPETAEMMITR.

A compositionally biased stretch (basic residues) spans 1–11; the sequence is MAKMHTKRKGK. The segment at 1-23 is disordered; the sequence is MAKMHTKRKGKSSSTRPIRTDPP.

The protein belongs to the universal ribosomal protein uS15 family. In terms of assembly, part of the 30S ribosomal subunit.

The protein is Small ribosomal subunit protein uS15 of Methanosarcina acetivorans (strain ATCC 35395 / DSM 2834 / JCM 12185 / C2A).